A 122-amino-acid polypeptide reads, in one-letter code: Large ribosomal subunit protein uL14 (122 aa).

The protein belongs to the universal ribosomal protein uL14 family. In terms of assembly, part of the 50S ribosomal subunit. Forms a cluster with proteins L3 and L19. In the 70S ribosome, L14 and L19 interact and together make contacts with the 16S rRNA in bridges B5 and B8.

Functionally, binds to 23S rRNA. Forms part of two intersubunit bridges in the 70S ribosome. This chain is Large ribosomal subunit protein uL14, found in Chlamydia trachomatis serovar L2 (strain ATCC VR-902B / DSM 19102 / 434/Bu).